The chain runs to 514 residues: Probable peptidoglycan glycosyltransferase FtsW (514 aa).

The next 9 membrane-spanning stretches (helical) occupy residues 45-65, 86-106, 108-128, 137-157, 182-202, 218-238, 301-321, 347-367, and 373-393; these read IGLI…VTSA, IYIV…MQFW, TANP…LLVG, WLAL…FFFT, VVFF…TVVV, LWQF…LIVF, ILAE…ILWM, VGIW…GILP, and LPLV…VALL. Disordered stretches follow at residues 411 to 437 and 449 to 501; these read GDNK…RTKH and DYNQ…AGIK.

This sequence belongs to the SEDS family. FtsW subfamily.

It is found in the cell inner membrane. The enzyme catalyses [GlcNAc-(1-&gt;4)-Mur2Ac(oyl-L-Ala-gamma-D-Glu-L-Lys-D-Ala-D-Ala)](n)-di-trans,octa-cis-undecaprenyl diphosphate + beta-D-GlcNAc-(1-&gt;4)-Mur2Ac(oyl-L-Ala-gamma-D-Glu-L-Lys-D-Ala-D-Ala)-di-trans,octa-cis-undecaprenyl diphosphate = [GlcNAc-(1-&gt;4)-Mur2Ac(oyl-L-Ala-gamma-D-Glu-L-Lys-D-Ala-D-Ala)](n+1)-di-trans,octa-cis-undecaprenyl diphosphate + di-trans,octa-cis-undecaprenyl diphosphate + H(+). It functions in the pathway cell wall biogenesis; peptidoglycan biosynthesis. Its function is as follows. Peptidoglycan polymerase that is essential for cell division. This Alteromonas naphthalenivorans protein is Probable peptidoglycan glycosyltransferase FtsW.